Consider the following 433-residue polypeptide: MEPKEKKQKLDTSEVASPSLSKTHLKKKKTKKQKIRKSQEITSPSLSKNTDLVIASPSLSNIDVGEAMKKQNDVAIFLTGIVISSVAKNSNFVFSPASINAALTMVAASSGGEQGEELRSFILSFLKSSSTDELNAIFREIASVVLVDGSKKGGPKIAVVNGMWMDQSLSVNPLSKDLFKNFFSAAFAQVDFRSKAEEVRTEVNAWASSHTNGLIKDLLPRGSVTSLTDRVYGSALYFKGTWEEKYSKSMTKCKPFYLLNGTSVSVPFMSSFEKQYIAAYDGFKVLRLPYRQGRDNTNRNFAMYIYLPDKKGELDDLLERMTSTPGFLDSHNPERRVKVGKFRIPKFKIEFGFEASSAFSDFELDVSFYQKTLIEIDEKGTEAVTFTAFRSAYLGCALVKPIDFVADHPFLFLIREEQTGTVLFAGQIFDPSA.

Residues methionine 1 to threonine 12 show a composition bias toward basic and acidic residues. The disordered stretch occupies residues methionine 1–serine 43. Basic residues predominate over residues threonine 23 to arginine 36. The interval glycine 380–phenylalanine 404 is RCL.

Belongs to the serpin family. In terms of tissue distribution, weakly expressed during seedling development.

The protein is Probable non-inhibitory serpin-Z5 of Arabidopsis thaliana (Mouse-ear cress).